The chain runs to 223 residues: Ribose-5-phosphate isomerase A (223 aa).

Substrate is bound by residues 28-31 (TGST), 81-84 (DGAD), and 94-97 (KGGG). The active-site Proton acceptor is the Glu103. Lys121 serves as a coordination point for substrate.

The protein belongs to the ribose 5-phosphate isomerase family. Homodimer.

It carries out the reaction aldehydo-D-ribose 5-phosphate = D-ribulose 5-phosphate. It functions in the pathway carbohydrate degradation; pentose phosphate pathway; D-ribose 5-phosphate from D-ribulose 5-phosphate (non-oxidative stage): step 1/1. Its function is as follows. Catalyzes the reversible conversion of ribose-5-phosphate to ribulose 5-phosphate. In Ruthia magnifica subsp. Calyptogena magnifica, this protein is Ribose-5-phosphate isomerase A.